Consider the following 135-residue polypeptide: Glutaredoxin-C5 (135 aa).

In terms of domain architecture, Glutaredoxin spans 29–134; that stretch reads AERVERLASE…PLLKEAGALW (106 aa). The cysteines at positions 49 and 52 are disulfide-linked. The Responsive for interaction with TGA factors motif lies at 132–135; that stretch reads ALWL.

It belongs to the glutaredoxin family. CC-type subfamily.

It localises to the cytoplasm. The protein localises to the nucleus. Has a glutathione-disulfide oxidoreductase activity in the presence of NADPH and glutathione reductase. Reduces low molecular weight disulfides and proteins. This Oryza sativa subsp. japonica (Rice) protein is Glutaredoxin-C5 (GRXC5).